The sequence spans 514 residues: Extracellular exo-inulinase inuE (514 aa).

The first 18 residues, 1–18, serve as a signal peptide directing secretion; the sequence is MRAFLALIFLTFVMNVES. Substrate is bound by residues 33-34 and glutamine 52; that span reads ND. Aspartate 34 functions as the Nucleophile in the catalytic mechanism. N-linked (GlcNAc...) asparagine glycosylation occurs at asparagine 56. Substrate is bound by residues tryptophan 60 and serine 95. Asparagine 104 and asparagine 110 each carry an N-linked (GlcNAc...) asparagine glycan. 162–163 contributes to the substrate binding site; that stretch reads RD. Residues asparagine 197 and asparagine 203 are each glycosylated (N-linked (GlcNAc...) asparagine). Glutamate 214 and tryptophan 300 together coordinate substrate. Glutamate 214 serves as the catalytic Proton donor/acceptor. N-linked (GlcNAc...) asparagine glycosylation is found at asparagine 357, asparagine 371, asparagine 389, and asparagine 422.

The protein belongs to the glycosyl hydrolase 32 family.

It is found in the secreted. The catalysed reaction is Hydrolysis of terminal, non-reducing (2-&gt;1)- and (2-&gt;6)-linked beta-D-fructofuranose residues in fructans.. Exo-inulinase involved in utilization of the plant storage polymer inulin, consisting of fructooligosaccharides with a degree of polymerization (DP) value from 2 to 60. Splits off terminal fructose units successively from the non-reducing end of the inulin molecule. The protein is Extracellular exo-inulinase inuE of Meyerozyma guilliermondii (Yeast).